Here is a 398-residue protein sequence, read N- to C-terminus: UDP-D-apiose/UDP-D-xylose synthase (398 aa).

Position 57–88 (Asp57–Asp88) interacts with NAD(+). Arg190 is a binding site for substrate. Tyr193 acts as the Proton acceptor in catalysis. Tyr193–Lys197 provides a ligand contact to NAD(+). Substrate is bound at residue Asn222. Arg243 is an NAD(+) binding site. Substrate contacts are provided by residues Val244 to Phe248, Val261 to Arg268, and Asp345 to Arg349.

This sequence belongs to the NAD(P)-dependent epimerase/dehydratase family. Homodimer. Requires NAD(+) as cofactor.

Its subcellular location is the cytoplasm. Catalyzes the conversion of UDP-D-glucuronate to a mixture of UDP-D-apiose and UDP-D-xylose. D-Apiose (3-C-hydroxymethyl-d-erythrose) is the only plant cell wall monosaccharide with a branched carbon skeleton and found in rhamnogalacturonan II (RG-II), apiogalacturonan, and several apioglycosides. This Oryza sativa subsp. japonica (Rice) protein is UDP-D-apiose/UDP-D-xylose synthase.